The primary structure comprises 338 residues: UDP-glucose 4-epimerase (338 aa).

Residues Y11 to I12, D31 to S36, D58 to I59, F80 to K84, N99, S124, Y149, K153, and F178 each bind NAD(+). The substrate site is built by S124 and Y149. Y149 acts as the Proton acceptor in catalysis. Substrate contacts are provided by residues N179, N199–L200, S216–F218, R231, and R292–D295.

It belongs to the NAD(P)-dependent epimerase/dehydratase family. As to quaternary structure, homodimer. It depends on NAD(+) as a cofactor.

The enzyme catalyses UDP-alpha-D-glucose = UDP-alpha-D-galactose. It functions in the pathway carbohydrate metabolism; galactose metabolism. Its function is as follows. Involved in the metabolism of galactose. Catalyzes the conversion of UDP-galactose (UDP-Gal) to UDP-glucose (UDP-Glc) through a mechanism involving the transient reduction of NAD. By controlling the internal galactose concentration, it may be linked to the biosynthesis of lipopolysaccharide surface molecules, which are important for the pathogenesis of H.influenzae. This chain is UDP-glucose 4-epimerase (galE), found in Haemophilus influenzae (strain ATCC 51907 / DSM 11121 / KW20 / Rd).